A 642-amino-acid polypeptide reads, in one-letter code: Threonine--tRNA ligase (642 aa).

In terms of domain architecture, TGS spans 1 to 61 (MPVITLPDGS…ETDAELSIIT (61 aa)). Residues 243–534 (DHRKIGKQLD…LIEEYAGRFP (292 aa)) are catalytic. Zn(2+) is bound by residues C334, H385, and H511.

It belongs to the class-II aminoacyl-tRNA synthetase family. Homodimer. Zn(2+) is required as a cofactor.

The protein resides in the cytoplasm. The enzyme catalyses tRNA(Thr) + L-threonine + ATP = L-threonyl-tRNA(Thr) + AMP + diphosphate + H(+). Its function is as follows. Catalyzes the attachment of threonine to tRNA(Thr) in a two-step reaction: L-threonine is first activated by ATP to form Thr-AMP and then transferred to the acceptor end of tRNA(Thr). Also edits incorrectly charged L-seryl-tRNA(Thr). This chain is Threonine--tRNA ligase, found in Shewanella sp. (strain W3-18-1).